Here is a 185-residue protein sequence, read N- to C-terminus: MIDEIRKDAETRMKKSIEAFRAELRKIRTGRAHTNLLDHISVTYYGTEVPLNQAASVKVEDARTLSVIPFEKSMVPEVEKAIQSSDLGLTPTTAGTVIRIPMPPLTEDRRKELVKVVRSEAEQARVAIRNIRRDANSDLKELLKEKEISEDEERGGEDAIQKLTDKYTGEVDRILQEKEKELMEI.

This sequence belongs to the RRF family.

Its subcellular location is the cytoplasm. Functionally, responsible for the release of ribosomes from messenger RNA at the termination of protein biosynthesis. May increase the efficiency of translation by recycling ribosomes from one round of translation to another. This chain is Ribosome-recycling factor, found in Alkalilimnicola ehrlichii (strain ATCC BAA-1101 / DSM 17681 / MLHE-1).